The chain runs to 268 residues: Transcription initiation factor TFIID subunit 14b (268 aa).

Residues 1–20 are compositionally biased toward polar residues; sequence MTNSSSSKKQAQDQPETSEP. The segment at 1 to 36 is disordered; sequence MTNSSSSKKQAQDQPETSEPTLKSLKTKMTKSDEKQ. Residues 38–182 form the YEATS domain; sequence KLKDIEISVP…ESFLARVQNH (145 aa). Residues 229-263 are a coiled coil; sequence DELLQLAAARQQVQAHIAKLRRQISLLEGQNQTVK.

The protein belongs to the YAF9 family. As to quaternary structure, component of the TFIID complex. TFIID is composed of TATA binding protein (TBP) and a number of TBP-associated factors (TAFs) whose MWs range from 14-217 kDa. Interacts with TAF1, TAF4B and TAF12B. Component of the SWR1 chromatin-remodeling complex. Interacts with FLX, a component of the transcription activator complex FRI-C. Interacts with SWC4, and with EAF1A and EAF1B (via HSA domain). As to expression, expressed in roots, leaves, inflorescence and flowering tissues.

Its subcellular location is the cytoplasm. It localises to the nucleus. Its function is as follows. Negative regulator of flowering controlling the H4K5 acetylation levels in the FLC and FT chromatin. Positively regulates FLC expression. Component of the transcription factor IID (TFIID) complex that is essential for mediating regulation of RNA polymerase transcription. Component of the SWR1 complex which mediates the ATP-dependent exchange of histone H2A for the H2A variant HZT1 leading to transcriptional regulation of selected genes by chromatin remodeling. Component of a NuA4 histone acetyltransferase complex which is involved in transcriptional activation of selected genes principally by acetylation of nucleosomal histones H4 and H2A. This Arabidopsis thaliana (Mouse-ear cress) protein is Transcription initiation factor TFIID subunit 14b.